The primary structure comprises 41 residues: Cytochrome b559 subunit beta (41 aa).

A helical membrane pass occupies residues 16 to 32; sequence WLAIHALAVPTVFFLGS. Histidine 20 contacts heme.

This sequence belongs to the PsbE/PsbF family. In terms of assembly, heterodimer of an alpha subunit and a beta subunit. PSII is composed of 1 copy each of membrane proteins PsbA, PsbB, PsbC, PsbD, PsbE, PsbF, PsbH, PsbI, PsbJ, PsbK, PsbL, PsbM, PsbT, PsbX, PsbY, PsbZ, Psb30/Ycf12, at least 3 peripheral proteins of the oxygen-evolving complex and a large number of cofactors. It forms dimeric complexes. The cofactor is heme b.

Its subcellular location is the plastid. It localises to the chloroplast thylakoid membrane. Its function is as follows. This b-type cytochrome is tightly associated with the reaction center of photosystem II (PSII). PSII is a light-driven water:plastoquinone oxidoreductase that uses light energy to abstract electrons from H(2)O, generating O(2) and a proton gradient subsequently used for ATP formation. It consists of a core antenna complex that captures photons, and an electron transfer chain that converts photonic excitation into a charge separation. This is Cytochrome b559 subunit beta from Oltmannsiellopsis viridis (Marine flagellate).